Reading from the N-terminus, the 237-residue chain is Ribonuclease PH (237 aa).

Phosphate-binding positions include arginine 86 and 124 to 126 (GTR).

The protein belongs to the RNase PH family. Homohexameric ring arranged as a trimer of dimers.

It catalyses the reaction tRNA(n+1) + phosphate = tRNA(n) + a ribonucleoside 5'-diphosphate. Its function is as follows. Phosphorolytic 3'-5' exoribonuclease that plays an important role in tRNA 3'-end maturation. Removes nucleotide residues following the 3'-CCA terminus of tRNAs; can also add nucleotides to the ends of RNA molecules by using nucleoside diphosphates as substrates, but this may not be physiologically important. Probably plays a role in initiation of 16S rRNA degradation (leading to ribosome degradation) during starvation. The protein is Ribonuclease PH of Shewanella baltica (strain OS223).